The following is a 313-amino-acid chain: 2-phosphoglycerate kinase (313 aa).

Positions 8–95 (NKILVKDKDY…LWRRVLKKHS (88 aa)) constitute an ATP-cone domain.

Belongs to the 2-phosphoglycerate kinase family. Requires a divalent metal cation as cofactor.

The catalysed reaction is (2R)-2-phosphoglycerate + ATP = (2R)-2,3-bisphosphoglycerate + ADP + H(+). The protein operates within thermoadapter biosynthesis; cyclic 2,3-diphosphoglycerate biosynthesis; cyclic 2,3-diphosphoglycerate from 2-phospho-D-glycerate: step 1/2. Its function is as follows. Catalyzes the phosphorylation of 2-phosphoglycerate to 2,3-diphosphoglycerate. Involved in the biosynthesis of cyclic 2,3-bisphosphoglycerate, a thermoprotectant. The protein is 2-phosphoglycerate kinase of Methanococcus vannielii (strain ATCC 35089 / DSM 1224 / JCM 13029 / OCM 148 / SB).